The following is a 447-amino-acid chain: Argininosuccinate synthase (447 aa).

ATP-binding positions include 17-25 and A43; that span reads AFSGGLDTS. Y99 serves as a coordination point for L-citrulline. ATP is bound by residues G129 and T131. L-aspartate is bound by residues T131, N135, and D136. Residue N135 participates in L-citrulline binding. Residue D136 participates in ATP binding. Residues R139 and S192 each coordinate L-citrulline. An ATP-binding site is contributed by D194. L-citrulline is bound by residues T201, E203, and E280.

Belongs to the argininosuccinate synthase family. Type 2 subfamily. In terms of assembly, homotetramer.

Its subcellular location is the cytoplasm. It catalyses the reaction L-citrulline + L-aspartate + ATP = 2-(N(omega)-L-arginino)succinate + AMP + diphosphate + H(+). Its pathway is amino-acid biosynthesis; L-arginine biosynthesis; L-arginine from L-ornithine and carbamoyl phosphate: step 2/3. This Salmonella typhi protein is Argininosuccinate synthase (argG).